The sequence spans 603 residues: Glutamyl-tRNA(Gln) amidotransferase subunit B, mitochondrial (603 aa).

The transit peptide at 1–32 directs the protein to the mitochondrion; it reads MIRHRLRLALSAAPVTATGRRTRSKTAPRRSL. A disordered region spans residues 12–59; the sequence is AAPVTATGRRTRSKTAPRRSLSTQQTQSSASSSSNNLDGDGRAFVPLR. Low complexity predominate over residues 31–48; that stretch reads SLSTQQTQSSASSSSNNL.

This sequence belongs to the GatB/GatE family. GatB subfamily. As to quaternary structure, subunit of the heterotrimeric GatCAB amidotransferase (AdT) complex, composed of A, B and C subunits.

It localises to the mitochondrion. It catalyses the reaction L-glutamyl-tRNA(Gln) + L-glutamine + ATP + H2O = L-glutaminyl-tRNA(Gln) + L-glutamate + ADP + phosphate + H(+). Allows the formation of correctly charged Gln-tRNA(Gln) through the transamidation of misacylated Glu-tRNA(Gln) in the mitochondria. The reaction takes place in the presence of glutamine and ATP through an activated gamma-phospho-Glu-tRNA(Gln). This is Glutamyl-tRNA(Gln) amidotransferase subunit B, mitochondrial from Arthroderma otae (strain ATCC MYA-4605 / CBS 113480) (Microsporum canis).